Here is a 168-residue protein sequence, read N- to C-terminus: MNPIFEAFWYILPAYFANSSPVVLGGGTPIDFGKKWRDGRRIFGDGKTWRGFFGGITVGTVVGTIQHLMFPGYYGSLKLAVGVAFLLSLGALVGDLIGSFIKRRLNMPRGYPAVGLDQWGFLISALCFAYPLRTIPTGEVLFLLVVTPVIHWLANVFAYRMKWKNVPW.

The next 5 membrane-spanning stretches (helical) occupy residues 4–24 (IFEA…PVVL), 51–71 (GFFG…LMFP), 81–101 (VGVA…GSFI), 112–132 (PAVG…AYPL), and 138–158 (GEVL…NVFA).

Belongs to the CDP-archaeol synthase family. Requires Mg(2+) as cofactor.

It localises to the cell membrane. The catalysed reaction is 2,3-bis-O-(geranylgeranyl)-sn-glycerol 1-phosphate + CTP + H(+) = CDP-2,3-bis-O-(geranylgeranyl)-sn-glycerol + diphosphate. It functions in the pathway membrane lipid metabolism; glycerophospholipid metabolism. Catalyzes the formation of CDP-2,3-bis-(O-geranylgeranyl)-sn-glycerol (CDP-archaeol) from 2,3-bis-(O-geranylgeranyl)-sn-glycerol 1-phosphate (DGGGP) and CTP. This reaction is the third ether-bond-formation step in the biosynthesis of archaeal membrane lipids. The sequence is that of CDP-archaeol synthase from Pyrococcus abyssi (strain GE5 / Orsay).